The primary structure comprises 222 residues: Interleukin-12 subunit alpha (222 aa).

Residues 1–25 (MCPPRGLLLVTILVLLSHLDHLTWA) form the signal peptide. 3 cysteine pairs are disulfide-bonded: Cys40–Cys113, Cys67–Cys199, and Cys88–Cys126. N-linked (GlcNAc...) asparagine glycosylation is found at Asn42, Asn96, and Asn110.

The protein belongs to the IL-6 superfamily. In terms of assembly, heterodimer with IL12B; disulfide-linked. This heterodimer is known as interleukin IL-12. Heterodimer with EBI3/IL27B; not disulfide-linked. This heterodimer is known as interleukin IL-35. Interacts with NBR1; this interaction promotes IL-12 secretion.

Its subcellular location is the secreted. Functionally, heterodimerizes with IL12B to form the IL-12 cytokine or with EBI3/IL27B to form the IL-35 cytokine. IL-12 is primarily produced by professional antigen-presenting cells (APCs) such as B-cells and dendritic cells (DCs) as well as macrophages and granulocytes and regulates T-cell and natural killer-cell responses, induces the production of interferon-gamma (IFN-gamma), favors the differentiation of T-helper 1 (Th1) cells and is an important link between innate resistance and adaptive immunity. Mechanistically, exerts its biological effects through a receptor composed of IL12R1 and IL12R2 subunits. Binding to the receptor results in the rapid tyrosine phosphorylation of a number of cellular substrates including the JAK family kinases TYK2 and JAK2. In turn, recruited STAT4 gets phosphorylated and translocates to the nucleus where it regulates cytokine/growth factor responsive genes. As part of IL-35, plays essential roles in maintaining the immune homeostasis of the liver microenvironment and also functions as an immune-suppressive cytokine. Mediates biological events through unconventional receptors composed of IL12RB2 and gp130/IL6ST heterodimers or homodimers. Signaling requires the transcription factors STAT1 and STAT4, which form a unique heterodimer that binds to distinct DNA sites. The chain is Interleukin-12 subunit alpha (IL12A) from Canis lupus familiaris (Dog).